We begin with the raw amino-acid sequence, 251 residues long: MSLLLENLIEEDTIFFAGSISEYDDLQMVIAGAKSKFPRSMLSIFNIVPRTMSKYELELIHNENITGAMFTTMYNIRNNLGLGDDKLTIEAIENYFLDPNNEVMPLIINNTDMTAVIPKKSGRRKNKNMVIFRQGSSPILCIFETRKKINIYKENMESASTEYTPIGDNKALISKYAGINILNVYSPSTSIRLNAIYGFTNKNKLEKLSTNKELESYSSSPLQEPIRLNDFLGLLECVKKNIPLTDIPTKD.

The propeptide at 1–32 is removed by core protease OPG083/I7; the sequence is MSLLLENLIEEDTIFFAGSISEYDDLQMVIAG.

Belongs to the orthopoxvirus OPG098 family. In terms of processing, undergoes morphogenesis-associated proteolysis which cleaves the 28 kDa to a 25-kDa product. Proteolytic cleavage of major core proteins P4a (OPG136/A10L), P4b (OPG129/A3L), and VP8 (OPG098/L4R), which occurs at a late stage of core formation, is required for production of infectious mature virions (MV).

The protein resides in the virion. It is found in the host cytoplasm. In terms of biological role, major core structural protein. This chain is Core protein VP8 (OPG098), found in Vaccinia virus (strain Western Reserve) (VACV).